Consider the following 172-residue polypeptide: MDRTQKEATVAALNSSLQEAGLIIVTKQSGMTVAEVTDLRRKMRAAGCSFKVTKNRLARIALKGTQFETLDGFFKGPTAIAYSKDPVAAAKVAVDYAKTNDKFQIVGGGLPGLKLDSQGVDALSKLPSLNELRASLLGMIQTPATRIAGVLQAPGGQVARVLAAYAKKDEAA.

Belongs to the universal ribosomal protein uL10 family. In terms of assembly, part of the ribosomal stalk of the 50S ribosomal subunit. The N-terminus interacts with L11 and the large rRNA to form the base of the stalk. The C-terminus forms an elongated spine to which L12 dimers bind in a sequential fashion forming a multimeric L10(L12)X complex.

Functionally, forms part of the ribosomal stalk, playing a central role in the interaction of the ribosome with GTP-bound translation factors. In Rhodospirillum centenum (strain ATCC 51521 / SW), this protein is Large ribosomal subunit protein uL10.